We begin with the raw amino-acid sequence, 972 residues long: POM121-like protein 2 (972 aa).

6 disordered regions span residues 1 to 67, 281 to 302, 328 to 359, 406 to 431, 676 to 726, and 953 to 972; these read MGSY…PANP, LKKA…SGQL, TEED…IPEM, GISS…PVTD, LGLS…AIDG, and SKTL…TYKK. Over residues 40–57 the composition is skewed to basic residues; that stretch reads RVQHVHRAQPARRHRPAR. 2 stretches are compositionally biased toward polar residues: residues 287–302 and 339–352; these read SPNS…SGQL and VPSN…TGTA. The span at 413 to 431 shows a compositional bias: low complexity; sequence PSIASTQASPSSPTTPVTD. Over residues 677–696 the composition is skewed to polar residues; that stretch reads GLSSTNQPPVTSSNSNVTSA. Residues 697–706 are compositionally biased toward low complexity; it reads LTSSLGSSPK.

This sequence belongs to the POM121 family.

This chain is POM121-like protein 2 (Pom121l2), found in Mus musculus (Mouse).